The chain runs to 147 residues: Hemoglobin subunit gamma (147 aa).

One can recognise a Globin domain in the interval 3–147; it reads NFTAEDKAAI…VASALASRYH (145 aa). Positions 64 and 93 each coordinate heme b.

Belongs to the globin family. In terms of assembly, heterotetramer of two alpha chains and two gamma chains in fetal hemoglobin (Hb F). As to expression, red blood cells.

Gamma chains make up the fetal hemoglobin F, in combination with alpha chains. The sequence is that of Hemoglobin subunit gamma (HBG) from Lagothrix lagotricha (Brown woolly monkey).